The primary structure comprises 318 residues: Protoheme IX farnesyltransferase (318 aa).

Transmembrane regions (helical) follow at residues 27–47 (IMML…GMTG), 52–72 (PAMA…AGAI), 103–123 (LTMG…ASNW), 124–144 (LAAA…TMWL), 152–172 (IVIG…AVTG), 179–199 (WILF…LSLL), 225–245 (ILVY…TGLG), 248–268 (IYGA…VAIL), and 288–308 (AFLF…VEHA).

Belongs to the UbiA prenyltransferase family. Protoheme IX farnesyltransferase subfamily. Interacts with CtaA.

The protein localises to the cell inner membrane. The enzyme catalyses heme b + (2E,6E)-farnesyl diphosphate + H2O = Fe(II)-heme o + diphosphate. Its pathway is porphyrin-containing compound metabolism; heme O biosynthesis; heme O from protoheme: step 1/1. Its function is as follows. Converts heme B (protoheme IX) to heme O by substitution of the vinyl group on carbon 2 of heme B porphyrin ring with a hydroxyethyl farnesyl side group. In Hyphomonas neptunium (strain ATCC 15444), this protein is Protoheme IX farnesyltransferase.